Consider the following 104-residue polypeptide: Nucleoid-associated protein EF_2780 (104 aa).

This sequence belongs to the YbaB/EbfC family. As to quaternary structure, homodimer.

The protein resides in the cytoplasm. It localises to the nucleoid. Its function is as follows. Binds to DNA and alters its conformation. May be involved in regulation of gene expression, nucleoid organization and DNA protection. The polypeptide is Nucleoid-associated protein EF_2780 (Enterococcus faecalis (strain ATCC 700802 / V583)).